We begin with the raw amino-acid sequence, 257 residues long: Zinc-finger homeodomain protein 6 (257 aa).

The disordered stretch occupies residues 1 to 35 (MEFRGHDEPVDEMGVAYGRTPPSSSSSPAASASAG). A compositionally biased stretch (low complexity) spans 21-35 (PPSSSSSPAASASAG). Residues 45–93 (YHECLRNHAAAMGGHVVDGCGEFMPMPGDAADALKCAACGCHRSFHRKD) form a ZF-HD dimerization-type; degenerate zinc finger. Positions 106-125 (PSPPTPRVPLLMPPPQPQPH) are enriched in pro residues. Disordered regions lie at residues 106-182 (PSPP…TKFT) and 228-257 (NNKS…QQQQ). The segment covering 141–155 (YHHTPSGSGGTTTES) has biased composition (low complexity). A DNA-binding region (homeobox) is located at residues 174–237 (RKRFRTKFTP…NNKSSIGSSS (64 aa)). Residues 242 to 257 (RRQPQEQQSQQQQQQQ) are compositionally biased toward low complexity.

In terms of assembly, homo- and heterodimer with other ZFHD proteins.

It is found in the nucleus. Its function is as follows. Putative transcription factor. This chain is Zinc-finger homeodomain protein 6 (ZHD6), found in Oryza sativa subsp. indica (Rice).